The chain runs to 387 residues: Carbamoyl phosphate synthase small chain (387 aa).

A CPSase region spans residues 1-196; the sequence is MEGVLSQLAV…FSINKQKFLF (196 aa). 3 residues coordinate L-glutamine: S51, G245, and G247. The region spanning 197–384 is the Glutamine amidotransferase type-1 domain; that stretch reads HVVVYDFGVK…IKLIVSQKTT (188 aa). The active-site Nucleophile is the C273. L-glutamine contacts are provided by L274, Q277, N315, and F318. Residues H357 and E359 contribute to the active site.

The protein belongs to the CarA family. As to quaternary structure, composed of two chains; the small (or glutamine) chain promotes the hydrolysis of glutamine to ammonia, which is used by the large (or ammonia) chain to synthesize carbamoyl phosphate. Tetramer of heterodimers (alpha,beta)4.

The catalysed reaction is hydrogencarbonate + L-glutamine + 2 ATP + H2O = carbamoyl phosphate + L-glutamate + 2 ADP + phosphate + 2 H(+). It carries out the reaction L-glutamine + H2O = L-glutamate + NH4(+). Its pathway is amino-acid biosynthesis; L-arginine biosynthesis; carbamoyl phosphate from bicarbonate: step 1/1. It participates in pyrimidine metabolism; UMP biosynthesis via de novo pathway; (S)-dihydroorotate from bicarbonate: step 1/3. Small subunit of the glutamine-dependent carbamoyl phosphate synthetase (CPSase). CPSase catalyzes the formation of carbamoyl phosphate from the ammonia moiety of glutamine, carbonate, and phosphate donated by ATP, constituting the first step of 2 biosynthetic pathways, one leading to arginine and/or urea and the other to pyrimidine nucleotides. The small subunit (glutamine amidotransferase) binds and cleaves glutamine to supply the large subunit with the substrate ammonia. This chain is Carbamoyl phosphate synthase small chain, found in Buchnera aphidicola subsp. Acyrthosiphon pisum (strain APS) (Acyrthosiphon pisum symbiotic bacterium).